The primary structure comprises 91 residues: Cell division topological specificity factor (91 aa).

The protein belongs to the MinE family.

Its function is as follows. Prevents the cell division inhibition by proteins MinC and MinD at internal division sites while permitting inhibition at polar sites. This ensures cell division at the proper site by restricting the formation of a division septum at the midpoint of the long axis of the cell. The sequence is that of Cell division topological specificity factor from Gloeobacter violaceus (strain ATCC 29082 / PCC 7421).